We begin with the raw amino-acid sequence, 699 residues long: Elongation factor G 1 (699 aa).

Residues 8-290 (EHYRNIGICA…AVIEFLPSPS (283 aa)) enclose the tr-type G domain. GTP is bound by residues 17–24 (AHVDAGKT), 88–92 (DTPGH), and 142–145 (NKMD).

This sequence belongs to the TRAFAC class translation factor GTPase superfamily. Classic translation factor GTPase family. EF-G/EF-2 subfamily.

The protein resides in the cytoplasm. Catalyzes the GTP-dependent ribosomal translocation step during translation elongation. During this step, the ribosome changes from the pre-translocational (PRE) to the post-translocational (POST) state as the newly formed A-site-bound peptidyl-tRNA and P-site-bound deacylated tRNA move to the P and E sites, respectively. Catalyzes the coordinated movement of the two tRNA molecules, the mRNA and conformational changes in the ribosome. The chain is Elongation factor G 1 from Vibrio parahaemolyticus serotype O3:K6 (strain RIMD 2210633).